The sequence spans 180 residues: Large ribosomal subunit protein uL6 (180 aa).

Belongs to the universal ribosomal protein uL6 family. Part of the 50S ribosomal subunit.

Functionally, this protein binds to the 23S rRNA, and is important in its secondary structure. It is located near the subunit interface in the base of the L7/L12 stalk, and near the tRNA binding site of the peptidyltransferase center. The sequence is that of Large ribosomal subunit protein uL6 from Caldanaerobacter subterraneus subsp. tengcongensis (strain DSM 15242 / JCM 11007 / NBRC 100824 / MB4) (Thermoanaerobacter tengcongensis).